Consider the following 175-residue polypeptide: MGIISYLATASEGGFHLNFDILETNIINLAIIIGVLYVYGSKFIGNILETRKSKIVADLEDAENRAKKAQEALTKAQKDLEQAQAQAAKIREDAKVAAEKTKQDILAKGRDEVEKLKASAVKELSTEQAKVITELKRRVAELALAKVEAQLRSDLDESAQAKLVDRSIAQLGGGA.

The helical transmembrane segment at 26–48 (IINLAIIIGVLYVYGSKFIGNIL) threads the bilayer.

The protein belongs to the ATPase B chain family. F-type ATPases have 2 components, F(1) - the catalytic core - and F(0) - the membrane proton channel. F(1) has five subunits: alpha(3), beta(3), gamma(1), delta(1), epsilon(1). F(0) has four main subunits: a(1), b(1), b'(1) and c(10-14). The alpha and beta chains form an alternating ring which encloses part of the gamma chain. F(1) is attached to F(0) by a central stalk formed by the gamma and epsilon chains, while a peripheral stalk is formed by the delta, b and b' chains.

The protein localises to the cellular thylakoid membrane. Functionally, f(1)F(0) ATP synthase produces ATP from ADP in the presence of a proton or sodium gradient. F-type ATPases consist of two structural domains, F(1) containing the extramembraneous catalytic core and F(0) containing the membrane proton channel, linked together by a central stalk and a peripheral stalk. During catalysis, ATP synthesis in the catalytic domain of F(1) is coupled via a rotary mechanism of the central stalk subunits to proton translocation. In terms of biological role, component of the F(0) channel, it forms part of the peripheral stalk, linking F(1) to F(0). This is ATP synthase subunit b 1 from Picosynechococcus sp. (strain ATCC 27264 / PCC 7002 / PR-6) (Agmenellum quadruplicatum).